Consider the following 713-residue polypeptide: Glycine--tRNA ligase beta subunit (713 aa).

This sequence belongs to the class-II aminoacyl-tRNA synthetase family. In terms of assembly, tetramer of two alpha and two beta subunits.

The protein resides in the cytoplasm. It carries out the reaction tRNA(Gly) + glycine + ATP = glycyl-tRNA(Gly) + AMP + diphosphate. This Leptothrix cholodnii (strain ATCC 51168 / LMG 8142 / SP-6) (Leptothrix discophora (strain SP-6)) protein is Glycine--tRNA ligase beta subunit.